A 393-amino-acid polypeptide reads, in one-letter code: Phospholipid-transporting ATPase accessory subunit CRF1 (393 aa).

Topologically, residues 1 to 46 (MGLILRWKEKKQLSSKQNAQKSRKPANTSFRQQRLKAWQPILSPQS) are cytoplasmic. Residues 47-67 (VLPLLILMACVFAPIGIGLVV) form a helical membrane-spanning segment. Residues 68–334 (STISVQRLVV…NSIIGAGNEA (267 aa)) are Lumenal-facing. The segment at 70–332 (ISVQRLVVNY…TTNSIIGAGN (263 aa)) is confers specificity for binding DNF3. N-linked (GlcNAc...) asparagine glycans are attached at residues Asn78, Asn123, Asn187, Asn202, Asn213, Asn240, and Asn291. 2 disulfide bridges follow: Cys82-Cys126 and Cys179-Cys193. The helical transmembrane segment at 335-355 (LGIVYLIVAGIATLFAILFLI) threads the bilayer. Topologically, residues 356–393 (KVIFKPRPMHDHSYLNFENSDTPFDESSVVSIPLREIL) are cytoplasmic.

It belongs to the CDC50/LEM3 family. In terms of assembly, component of a flippase complex consisting of DNF3 and YNR048W/CRF1. Interacts with DNF3; the interaction is direct and required for proper expression and endoplasmic reticulum (ER) export of either partner.

It is found in the golgi apparatus. Its subcellular location is the trans-Golgi network membrane. Functionally, accessory component of a P4-ATPase flippase complex which catalyzes the hydrolysis of ATP coupled to the transport of phosphatidylcholine and small amounts of phosphatidylethanolamine from the lumen to the cytosolic leaflet of the trans-Golgi network and ensures the maintenance of asymmetric distribution of phospholipids. May be involved in transport from early endosomes to the trans-Golgi network (TGN). The protein is Phospholipid-transporting ATPase accessory subunit CRF1 of Saccharomyces cerevisiae (strain ATCC 204508 / S288c) (Baker's yeast).